Here is a 418-residue protein sequence, read N- to C-terminus: Protease LasA (418 aa).

A signal peptide spans 1–31 (MQHKRSRALASPRSPFLFALLALAVGGTANA). The propeptide occupies 32–236 (HDDGLPAFRY…ARQLQAKAAL (205 aa)). Positions 259 and 272 each coordinate Zn(2+). A disulfide bridge links cysteine 301 with cysteine 347. Residues histidine 317 and histidine 356 each act as proton donor/acceptor in the active site. A Zn(2+)-binding site is contributed by histidine 358. Residues cysteine 391 and cysteine 406 are joined by a disulfide bond.

It belongs to the peptidase M23A family. Zn(2+) serves as cofactor.

Its subcellular location is the secreted. In terms of biological role, involved in proteolysis and elastolysis (degradation of the host protein elastin). Has staphylolytic activity (degrades pentaglycine cross-links in cell wall peptidoglycan), preferring Gly-Gly-|-X substrates where X is Ala or Gly. Enhances the elastolytic but not proteolytic activity of elastase (lasB) and elastolytic activity of other proteases. Degradation of elastin is likely to contribute to the pathogenicity of P.aeruginosa. The sequence is that of Protease LasA (lasA) from Pseudomonas aeruginosa (strain UCBPP-PA14).